Here is a 23-residue protein sequence, read N- to C-terminus: Defensin D4 (23 aa).

It belongs to the DEFL family. Group IV subfamily. As to expression, distributed in the epidermal cell layer of leaves and in the subepidermal layer region of stems. Not in roots.

The protein resides in the secreted. It localises to the cell wall. Functionally, antimicrobial peptide. Active against Fusarium spp., Gram-positive and Gram-negative bacterial pathogens. This Spinacia oleracea (Spinach) protein is Defensin D4.